Consider the following 306-residue polypeptide: Porphobilinogen deaminase (306 aa).

An S-(dipyrrolylmethanemethyl)cysteine modification is found at Cys234.

The protein belongs to the HMBS family. In terms of assembly, monomer. Dipyrromethane serves as cofactor.

It carries out the reaction 4 porphobilinogen + H2O = hydroxymethylbilane + 4 NH4(+). The protein operates within porphyrin-containing compound metabolism; protoporphyrin-IX biosynthesis; coproporphyrinogen-III from 5-aminolevulinate: step 2/4. Tetrapolymerization of the monopyrrole PBG into the hydroxymethylbilane pre-uroporphyrinogen in several discrete steps. This Mycobacteroides abscessus (strain ATCC 19977 / DSM 44196 / CCUG 20993 / CIP 104536 / JCM 13569 / NCTC 13031 / TMC 1543 / L948) (Mycobacterium abscessus) protein is Porphobilinogen deaminase.